The following is a 205-amino-acid chain: Holliday junction branch migration complex subunit RuvA (205 aa).

The domain I stretch occupies residues 1-64 (MIGKLKGVID…EDMIRLYGFA (64 aa)). The interval 65-143 (TQLEREWFRL…AFAGEASGTI (79 aa)) is domain II. A flexible linker region spans residues 144–152 (GLKQELGAG). The domain III stretch occupies residues 153–205 (AAPAPVADAVSALSNLGYSRDQAANAVAAALKETGEGADSAKLIRLGLKELSQ).

This sequence belongs to the RuvA family. Homotetramer. Forms an RuvA(8)-RuvB(12)-Holliday junction (HJ) complex. HJ DNA is sandwiched between 2 RuvA tetramers; dsDNA enters through RuvA and exits via RuvB. An RuvB hexamer assembles on each DNA strand where it exits the tetramer. Each RuvB hexamer is contacted by two RuvA subunits (via domain III) on 2 adjacent RuvB subunits; this complex drives branch migration. In the full resolvosome a probable DNA-RuvA(4)-RuvB(12)-RuvC(2) complex forms which resolves the HJ.

Its subcellular location is the cytoplasm. Its function is as follows. The RuvA-RuvB-RuvC complex processes Holliday junction (HJ) DNA during genetic recombination and DNA repair, while the RuvA-RuvB complex plays an important role in the rescue of blocked DNA replication forks via replication fork reversal (RFR). RuvA specifically binds to HJ cruciform DNA, conferring on it an open structure. The RuvB hexamer acts as an ATP-dependent pump, pulling dsDNA into and through the RuvAB complex. HJ branch migration allows RuvC to scan DNA until it finds its consensus sequence, where it cleaves and resolves the cruciform DNA. The sequence is that of Holliday junction branch migration complex subunit RuvA from Brucella abortus (strain S19).